The chain runs to 347 residues: UDP-3-O-acylglucosamine N-acyltransferase (347 aa).

Histidine 241 functions as the Proton acceptor in the catalytic mechanism.

Belongs to the transferase hexapeptide repeat family. LpxD subfamily. As to quaternary structure, homotrimer.

The catalysed reaction is a UDP-3-O-[(3R)-3-hydroxyacyl]-alpha-D-glucosamine + a (3R)-hydroxyacyl-[ACP] = a UDP-2-N,3-O-bis[(3R)-3-hydroxyacyl]-alpha-D-glucosamine + holo-[ACP] + H(+). It functions in the pathway bacterial outer membrane biogenesis; LPS lipid A biosynthesis. In terms of biological role, catalyzes the N-acylation of UDP-3-O-acylglucosamine using 3-hydroxyacyl-ACP as the acyl donor. Is involved in the biosynthesis of lipid A, a phosphorylated glycolipid that anchors the lipopolysaccharide to the outer membrane of the cell. This chain is UDP-3-O-acylglucosamine N-acyltransferase, found in Nitrosococcus oceani (strain ATCC 19707 / BCRC 17464 / JCM 30415 / NCIMB 11848 / C-107).